The chain runs to 521 residues: Solute carrier family 35 member F4 (521 aa).

Helical transmembrane passes span 160–180, 192–212, 248–266, 277–297, 301–321, 330–350, 365–385, 395–417, 419–441, and 450–470; these read MVLK…SWVG, FYCP…FFPV, FLKR…NYLY, DVSA…WIVL, FMGV…MMAY, IIGV…KVLF, FVST…VILY, FAAL…NILV, VGVV…PGNA, and VIFN…FLLM. In terms of domain architecture, EamA spans 261-321; sequence LTNYLYLLAL…AITGIVMMAY (61 aa).

The protein belongs to the SLC35F solute transporter family.

It is found in the membrane. Putative solute transporter. This is Solute carrier family 35 member F4 (SLC35F4) from Homo sapiens (Human).